We begin with the raw amino-acid sequence, 190 residues long: Dynein axonemal light chain 1 (190 aa).

N-acetylalanine is present on A2. 4 LRR repeats span residues 49–70, 71–92, 94–115, and 116–137; these read NCEK…NGLK, NLRI…EAVG, TLEE…HVMK, and KLKI…LKLA. Position 56 is a phosphoserine (S56). The region spanning 150–190 is the LRRCT domain; it reads NPLEEKHSAEGNWIDEATKRVPKLKKLDGTPVIKEDEEEES.

The protein belongs to the dynein light chain LC1-type family. In terms of assembly, interacts with ZMYND10 (via C-terminus). Interacts with DNAH5, a outer arm dynein heavy chain. Interacts with tubulin located within the A-tubule of the outer doublets in a ATP-independent manner. As to expression, expressed in the respiratory epithelium of the upper airways and the ependymal cells lining the brain ventricles.

It is found in the cytoplasm. The protein localises to the cytoskeleton. It localises to the cilium axoneme. In terms of biological role, part of the multisubunit axonemal ATPase complexes that generate the force for cilia motility and govern beat frequency. Component of the outer arm dynein (ODA). May be involved in a mechanosensory feedback mechanism controlling ODA activity based on external conformational cues by tethering the outer arm dynein heavy chain (DNAH5) to the microtubule within the axoneme. Important for ciliary function in the airways and for the function of the cilia that produce the nodal flow essential for the determination of the left-right asymmetry. The sequence is that of Dynein axonemal light chain 1 (Dnal1) from Mus musculus (Mouse).